A 132-amino-acid chain; its full sequence is Small ribosomal subunit protein uS8 (132 aa).

The protein belongs to the universal ribosomal protein uS8 family. In terms of assembly, part of the 30S ribosomal subunit. Contacts proteins S5 and S12.

One of the primary rRNA binding proteins, it binds directly to 16S rRNA central domain where it helps coordinate assembly of the platform of the 30S subunit. This is Small ribosomal subunit protein uS8 from Mycobacterium bovis (strain ATCC BAA-935 / AF2122/97).